The primary structure comprises 262 residues: Global transcriptional regulator CodY (262 aa).

Residues 1–159 (MATLLEKTRK…ATTVIGVQLS (159 aa)) are GAF domain. The segment at residues 207-226 (ASVIADKIGITRSVIVNALR) is a DNA-binding region (H-T-H motif).

Belongs to the CodY family.

It is found in the cytoplasm. In terms of biological role, DNA-binding global transcriptional regulator which is involved in the adaptive response to starvation and acts by directly or indirectly controlling the expression of numerous genes in response to nutrient availability. During rapid exponential growth, CodY is highly active and represses genes whose products allow adaptation to nutrient depletion. This Lactococcus lactis subsp. lactis (strain IL1403) (Streptococcus lactis) protein is Global transcriptional regulator CodY.